Consider the following 389-residue polypeptide: Acetate kinase (389 aa).

Mg(2+) is bound at residue Asn9. Residue Lys16 coordinates ATP. Arg77 provides a ligand contact to substrate. The Proton donor/acceptor role is filled by Asp134. ATP is bound by residues His194–Gly198, Asp268–Arg270, and Gly316–Asn320. Mg(2+) is bound at residue Glu370.

This sequence belongs to the acetokinase family. In terms of assembly, homodimer. Mg(2+) serves as cofactor. Mn(2+) is required as a cofactor.

The protein resides in the cytoplasm. The enzyme catalyses acetate + ATP = acetyl phosphate + ADP. The protein operates within metabolic intermediate biosynthesis; acetyl-CoA biosynthesis; acetyl-CoA from acetate: step 1/2. Its function is as follows. Catalyzes the formation of acetyl phosphate from acetate and ATP. Can also catalyze the reverse reaction. This Mycolicibacterium vanbaalenii (strain DSM 7251 / JCM 13017 / BCRC 16820 / KCTC 9966 / NRRL B-24157 / PYR-1) (Mycobacterium vanbaalenii) protein is Acetate kinase.